The chain runs to 623 residues: Low affinity potassium transport system protein Kup (623 aa).

12 consecutive transmembrane segments (helical) span residues 10–30 (LSAVTLAAIGVVYGDIGTSPL), 47–67 (PDVVFGFLSLIFWMLILIVSV), 102–122 (ILVILGLIGGSFFYGEVVITP), 138–158 (PALDPYIVPCSIAVLTLLFVI), 166–186 (VGKLFAPVMLVWFLTLALLGL), 214–234 (VSFFALGAVVLAITGVEALYA), 248–268 (WFTVVLPSLVLNYFGQGALLL), 277–297 (PFFLLAPDWALIPLLILATLA), 338–358 (IYIPVINWTLYLAVVLVIVGF), 364–384 (LAAAYGIAVTGTMVITSVLFC), 396–416 (FFVYFLLVALLVIDVPMFSAN), and 420–440 (LFSGGWLPLSLGLVMFIIMTT).

It belongs to the HAK/KUP transporter (TC 2.A.72) family.

The protein localises to the cell inner membrane. The enzyme catalyses K(+)(in) + H(+)(in) = K(+)(out) + H(+)(out). Its function is as follows. Responsible for the low-affinity transport of potassium into the cell. Likely operates as a K(+):H(+) symporter. The protein is Low affinity potassium transport system protein Kup of Yersinia enterocolitica serotype O:8 / biotype 1B (strain NCTC 13174 / 8081).